A 132-amino-acid chain; its full sequence is Large ribosomal subunit protein uL22c (132 aa).

This sequence belongs to the universal ribosomal protein uL22 family. As to quaternary structure, part of the 50S ribosomal subunit.

The protein localises to the plastid. It localises to the chloroplast. Functionally, this protein binds specifically to 23S rRNA. Its function is as follows. The globular domain of the protein is located near the polypeptide exit tunnel on the outside of the subunit, while an extended beta-hairpin is found that lines the wall of the exit tunnel in the center of the 70S ribosome. The polypeptide is Large ribosomal subunit protein uL22c (rpl22) (Populus alba (White poplar)).